Here is a 132-residue protein sequence, read N- to C-terminus: MIQVEIVSPQGMVYSGEVESVNVPTVEGEVGILENHMYLMTLLKPGLVYFNGDDKNGIAVTYGVLDVTPQKVLILAEEAYEVGKLPPASKLKEEFEEAVKKMATAQTMEELKEWEKEAEKARTLLELVEKYR.

It belongs to the ATPase epsilon chain family. As to quaternary structure, F-type ATPases have 2 components, CF(1) - the catalytic core - and CF(0) - the membrane proton channel. CF(1) has five subunits: alpha(3), beta(3), gamma(1), delta(1), epsilon(1). CF(0) has three main subunits: a, b and c.

It is found in the cell inner membrane. In terms of biological role, produces ATP from ADP in the presence of a proton gradient across the membrane. The protein is ATP synthase epsilon chain (atpC) of Aquifex aeolicus (strain VF5).